The chain runs to 258 residues: Imidazole glycerol phosphate synthase subunit HisF (258 aa).

Catalysis depends on residues aspartate 12 and aspartate 131.

It belongs to the HisA/HisF family. In terms of assembly, heterodimer of HisH and HisF.

Its subcellular location is the cytoplasm. The enzyme catalyses 5-[(5-phospho-1-deoxy-D-ribulos-1-ylimino)methylamino]-1-(5-phospho-beta-D-ribosyl)imidazole-4-carboxamide + L-glutamine = D-erythro-1-(imidazol-4-yl)glycerol 3-phosphate + 5-amino-1-(5-phospho-beta-D-ribosyl)imidazole-4-carboxamide + L-glutamate + H(+). The protein operates within amino-acid biosynthesis; L-histidine biosynthesis; L-histidine from 5-phospho-alpha-D-ribose 1-diphosphate: step 5/9. IGPS catalyzes the conversion of PRFAR and glutamine to IGP, AICAR and glutamate. The HisF subunit catalyzes the cyclization activity that produces IGP and AICAR from PRFAR using the ammonia provided by the HisH subunit. This chain is Imidazole glycerol phosphate synthase subunit HisF, found in Nocardioides sp. (strain ATCC BAA-499 / JS614).